A 198-amino-acid polypeptide reads, in one-letter code: Dynein light chain Tctex-type protein 2 (198 aa).

Residues 1-34 are disordered; the sequence is MEKRGRGVKSSPIQTPNQTPQQAPVTPRKERRPS. Residues 11-24 show a composition bias toward polar residues; sequence SPIQTPNQTPQQAP.

The protein belongs to the dynein light chain Tctex-type family. In terms of assembly, interacts with CCDC159. Interacts with CSNK2B. Expressed predominantly in testis. Also expressed in brain, lung and trachea.

The protein resides in the cytoplasm. It is found in the cytoskeleton. The protein localises to the cytoplasmic granule. It localises to the membrane. Functionally, may be an accessory component of axonemal dynein and cytoplasmic dynein 1. Candidate for involvement in male sterility. The sequence is that of Dynein light chain Tctex-type protein 2 from Homo sapiens (Human).